A 493-amino-acid polypeptide reads, in one-letter code: MPLYSVTVKWGKEKFGGVELNTDEPPMVFKAQLFALTGVQPARQRVMVKGGTLKDDDWGNIKIKNGMTILMMGSADALPEEPSAKTVFVEDMTEEQLASAMELPCGLTNLGNTCYMNATVQCIRSVPELKDALKRYAGALRASGEMASAQYITAALRDLFDSMDKTSSSIPPIILLQFLHMAFPQFAEKGEQGQYLQQDANECWIQMMRVLQQKLEAIEDDSVKETDSSAAAVAPSKKKSLIDQFFGVEFETTMKCTESEEEEVTKGKENQLQLSCFINQEVKYLFTGLKLRLQEEITKQSPTLQRNALYIKSSKISRLPAYLTIQMVRFFYKEKESVNAKVLKDVKFPLMLDVYELCTPELQEKMVSFRSKFKDIEDKKVNQQPNASDKKSSPQKEVRYEPFSFADDIGSNNCGYYDLQAVLTHQGRSSSSGHYVSWVKRKHDEWIKFDDDKVSIVTPEDILRLSGGGDWHIAYVLLYGPRRVEIMEEENEQ.

One can recognise a Ubiquitin-like domain in the interval 4-80 (YSVTVKWGKE…MMGSADALPE (77 aa)). Phosphothreonine is present on T52. The USP domain occupies 105-482 (CGLTNLGNTC…IAYVLLYGPR (378 aa)). C114 acts as the Nucleophile in catalysis. 5 positions are modified to phosphoserine: S143, S148, S236, S301, and S431. H434 functions as the Proton acceptor in the catalytic mechanism. An N6-acetyllysine modification is found at K448.

Belongs to the peptidase C19 family. USP14/UBP6 subfamily. As to quaternary structure, homodimer (Potential). Associates with the 26S proteasome. Interacts with FANCC, CXCR4 and ERN1. Interacts with TRIM14; this interaction recruits USP14 to cleave ubiquitin chains of CGAS.

It localises to the cytoplasm. The protein resides in the cell membrane. The enzyme catalyses Thiol-dependent hydrolysis of ester, thioester, amide, peptide and isopeptide bonds formed by the C-terminal Gly of ubiquitin (a 76-residue protein attached to proteins as an intracellular targeting signal).. Functionally, proteasome-associated deubiquitinase which releases ubiquitin from the proteasome targeted ubiquitinated proteins. Ensures the regeneration of ubiquitin at the proteasome. Is a reversibly associated subunit of the proteasome and a large fraction of proteasome-free protein exists within the cell. Required for the degradation of the chemokine receptor CXCR4 which is critical for CXCL12-induced cell chemotaxis. Also serves as a physiological inhibitor of endoplasmic reticulum-associated degradation (ERAD) under the non-stressed condition by inhibiting the degradation of unfolded endoplasmic reticulum proteins via interaction with ERN1. Indispensable for synaptic development and function at neuromuscular junctions (NMJs). Plays a role in the innate immune defense against viruses by stabilizing the viral DNA sensor CGAS and thus inhibiting its autophagic degradation. This is Ubiquitin carboxyl-terminal hydrolase 14 (USP14) from Oryctolagus cuniculus (Rabbit).